Reading from the N-terminus, the 270-residue chain is Thiamine thiazole synthase (270 aa).

NAD(+) contacts are provided by residues A39, 58-59 (EQ), G66, and L130. The residue at position 159 (C159) is a 2,3-didehydroalanine (Cys). D161 is a binding site for NAD(+). Fe cation contacts are provided by D161 and H176. An NAD(+)-binding site is contributed by I223. Residue R233 coordinates glycine.

This sequence belongs to the THI4 family. In terms of assembly, homooctamer; tetramer of dimers. The cofactor is Fe(2+). In terms of processing, during the catalytic reaction, a sulfide is transferred from Cys-159 to a reaction intermediate, generating a dehydroalanine residue.

The catalysed reaction is [ADP-thiazole synthase]-L-cysteine + glycine + NAD(+) = [ADP-thiazole synthase]-dehydroalanine + ADP-5-ethyl-4-methylthiazole-2-carboxylate + nicotinamide + 3 H2O + 2 H(+). It functions in the pathway cofactor biosynthesis; thiamine diphosphate biosynthesis. Functionally, involved in biosynthesis of the thiamine precursor thiazole. Catalyzes the conversion of NAD and glycine to adenosine diphosphate 5-(2-hydroxyethyl)-4-methylthiazole-2-carboxylic acid (ADT), an adenylated thiazole intermediate. The reaction includes an iron-dependent sulfide transfer from a conserved cysteine residue of the protein to a thiazole intermediate. The enzyme can only undergo a single turnover, which suggests it is a suicide enzyme. In Aeropyrum pernix (strain ATCC 700893 / DSM 11879 / JCM 9820 / NBRC 100138 / K1), this protein is Thiamine thiazole synthase.